The primary structure comprises 443 residues: Putative transporter AmpG 1 (443 aa).

The next 13 helical transmembrane spans lie at 5–25 (SHIY…MITG), 42–62 (IGML…APVF), 78–98 (LSWI…LSFL), 104–124 (LVLL…QDTI), 143–163 (GIYI…AIYL), 171–191 (AIYK…ILVA), 230–250 (FNYF…GFYF), 254–274 (DINL…YRLP), 299–319 (VCKF…GIIM), 324–344 (ILYS…FFIL), 354–374 (ILFI…TAYI), 393–413 (LSSM…YMVV), and 415–435 (FGWQ…LLIL).

Belongs to the major facilitator superfamily.

It is found in the cell inner membrane. This chain is Putative transporter AmpG 1 (ampG1), found in Rickettsia prowazekii (strain Madrid E).